A 157-amino-acid chain; its full sequence is E3 ubiquitin-protein ligase RHA1B (157 aa).

An RING-type; atypical zinc finger spans residues 85–129 (CTVCLSDFVSDDKIRQLPKCGHVFHHRCLDRWIVDCNKITCPICR).

It carries out the reaction S-ubiquitinyl-[E2 ubiquitin-conjugating enzyme]-L-cysteine + [acceptor protein]-L-lysine = [E2 ubiquitin-conjugating enzyme]-L-cysteine + N(6)-ubiquitinyl-[acceptor protein]-L-lysine.. The protein operates within protein modification; protein ubiquitination. Possesses E3 ubiquitin-protein ligase activity when associated with the E2 enzyme UBC8 in vitro. The protein is E3 ubiquitin-protein ligase RHA1B of Arabidopsis thaliana (Mouse-ear cress).